We begin with the raw amino-acid sequence, 310 residues long: 5'-adenylylsulfate reductase-like 4 (310 aa).

A signal peptide spans 1 to 22 (MEKEILLLLLVIMFLTVADVDA). A Thioredoxin domain is found at 49 to 168 (GVESDERPRF…LVAFYSDVTG (120 aa)). 2 N-linked (GlcNAc...) asparagine glycosylation sites follow: Asn-143 and Asn-190. Residues 217–237 (LAIVFVLLRLLHLIYPTLVVF) traverse the membrane as a helical segment.

The protein resides in the membrane. This is 5'-adenylylsulfate reductase-like 4 (APRL4) from Arabidopsis thaliana (Mouse-ear cress).